The following is a 354-amino-acid chain: DNA replication and repair protein RecF (354 aa).

30–37 is a binding site for ATP; sequence GDNGSGKT.

The protein belongs to the RecF family.

The protein resides in the cytoplasm. In terms of biological role, the RecF protein is involved in DNA metabolism; it is required for DNA replication and normal SOS inducibility. RecF binds preferentially to single-stranded, linear DNA. It also seems to bind ATP. This is DNA replication and repair protein RecF from Idiomarina loihiensis (strain ATCC BAA-735 / DSM 15497 / L2-TR).